We begin with the raw amino-acid sequence, 1244 residues long: ATP-dependent helicase/nuclease subunit A (1244 aa).

The region spanning 4 to 477 (TKWTEEQLSA…IQLYKNFRSR (474 aa)) is the UvrD-like helicase ATP-binding domain. Residue 25–32 (AAAGSGKT) participates in ATP binding. Residues 517-811 (KNVDDIIGGP…RIMSIHKSKG (295 aa)) enclose the UvrD-like helicase C-terminal domain.

The protein belongs to the helicase family. AddA subfamily. As to quaternary structure, heterodimer of AddA and AddB/RexB. The cofactor is Mg(2+).

It catalyses the reaction Couples ATP hydrolysis with the unwinding of duplex DNA by translocating in the 3'-5' direction.. The enzyme catalyses ATP + H2O = ADP + phosphate + H(+). Functionally, the heterodimer acts as both an ATP-dependent DNA helicase and an ATP-dependent, dual-direction single-stranded exonuclease. Recognizes the chi site generating a DNA molecule suitable for the initiation of homologous recombination. The AddA nuclease domain is required for chi fragment generation; this subunit has the helicase and 3' -&gt; 5' nuclease activities. The chain is ATP-dependent helicase/nuclease subunit A from Clostridium botulinum (strain Alaska E43 / Type E3).